The sequence spans 1298 residues: Activating molecule in BECN1-regulated autophagy protein 1 (1298 aa).

Residues 1 to 22 (MKVVPEKNAVRILWGRERGARA) are interaction with DDB1. A Glycyl lysine isopeptide (Lys-Gly) (interchain with G-Cter in ubiquitin) cross-link involves residue lysine 45. 3 WD repeats span residues 51 to 90 (DSPR…CVHS), 93 to 133 (GHRR…ESWF), and 135 to 175 (DSNN…AVVK). Position 52 is a phosphoserine; by MTOR (serine 52). Polar residues predominate over residues 254 to 266 (IQVGEQSTVQDSA). The tract at residues 254–284 (IQVGEQSTVQDSATPSPPPPPPQPSTERPRT) is disordered. The span at 268-277 (PSPPPPPPQP) shows a compositional bias: pro residues. The PxP motif 1 signature appears at 275–281 (PQPSTER). Position 328 is a phosphoserine (serine 328). Residues 343 to 413 (FVQTEPFHPP…SRYHREIAPG (71 aa)) form a disordered region. Polar residues predominate over residues 354 to 385 (QASSTQQDQGLLNRPSAFSTVQSSTAGNTLRN). Phosphoserine is present on residues serine 394 and serine 443. 3 stretches are compositionally biased toward polar residues: residues 458 to 467 (SQASVYTSAT), 547 to 561 (HQPT…SNLS), and 590 to 601 (NYSSGEASSSWQ). Disordered regions lie at residues 458–494 (SQAS…NSGS), 538–561 (IESE…SNLS), 590–690 (NYSS…DSLR), and 747–796 (RYQQ…NARM). Low complexity-rich tracts occupy residues 602 to 614 (VPSS…SSGS) and 628 to 639 (SSSRLELSSSAS). 2 positions are modified to phosphoserine: serine 635 and serine 639. Residues 661-674 (YTQSSRSGTVSQEA) show a composition bias toward polar residues. At arginine 747 the chain carries Asymmetric dimethylarginine. A compositionally biased stretch (acidic residues) spans 772–781 (TDLEFEDFED). At serine 1043 the chain carries Phosphoserine; by IKKA. The short motif at 1043–1052 (SGVEYYWDQL) is the LIR element. Positions 1060–1075 (HSNSRSSERPGTSRAT) are enriched in polar residues. Residues 1060 to 1079 (HSNSRSSERPGTSRATWRTD) are disordered. 2 consecutive short sequence motifs (TQT motif) follow at residues 1104 to 1106 (TQT) and 1116 to 1118 (TQT). Disordered regions lie at residues 1112–1143 (QNAE…YGAS), 1190–1214 (RSSQ…SRGL), and 1227–1298 (SPRT…PRNR). The segment covering 1191 to 1212 (SSQTGTEPGAAHTSSPQPSTSR) has biased composition (polar residues). Serine 1205 carries the post-translational modification Phosphoserine. The short motif at 1206–1212 (PQPSTSR) is the PxP motif 2 element.

It belongs to the WD repeat AMBRA1 family. Component of the DCX(AMBRA1) E3 ubiquitin ligase complex, also named CRL4(AMBRA1), at least composed of CUL4 (CUL4A or CUL4B), DDB1, AMBRA1 and RBX1. Interacts with BECN1. Probably forms a complex with BECN1 and PIK3C3. Interacts with BECN2. Interacts with BCL2; leading to prevent interaction with BCN1 and autophagy, interaction is disrupted upon autophagy induction. Interacts with ULK1. Interacts (via PxP motifs) with PPP2CA; enhancing interaction between PPP2CA and MYC or FOXO3. Forms a complex with PPP2CA and BECN1; AMBRA1 and BECN1 components of the complex regulate MYC stability via different pathways. Interacts (TQT motifs) with DYNLL1 and DYNLL2; tethering AMBRA1 and the BECN1-PIK3C3 complex in absence of autophagy. Interacts with TRAF6; interaction is required to mediate 'Lys-63'-linked ubiquitination of ULK1. Interacts with TRIM32; promoting activation of ULK1 by TRIM32 via unanchored 'Lys-63'-linked polyubiquitin chains. Interacts with PRKN. Interacts (via LIR motif) with LC3 (MAP1LC3A, MAP1LC3B or MAP1LC3C). Interacts with HUWE1. Interacts with PTK2/FAK. Interacts with SRC; required for SRC trafficking to autophagosomes. Post-translationally, phosphorylation at Ser-52 by MTOR inhibits its ability to regulate autophagy and mediate ubiquitination of ULK1. Phosphorylation by ULK1 in response to autophagy induction abolishes interaction with DYNLL1 and DYNLL2, releasing AMBRA1 from the cytoskeletal docking site to induce autophagosome nucleation. Phosphorylation by MTOR inhibits interaction with PPP2CA and subsequent dephosphorylation of MYC. Phosphorylation at Ser-1043 by CHUK/IKKA promotes its interaction with ATG8 family proteins GABARAP and MAP1LC3B and its mitophagic activity. Ubiquitinated by RNF2 via 'Lys-48'-linkage in unstressed cells, leading to its degradation by the proteasome. Induction of autophagy promotes stabilization via interaction with CUL4 (CUL4A or CUL4B) and DDB1. Upon prolonged starvation, ubiquitinated and degraded, terminating the autophagy response. In terms of processing, undergoes proteolytic processing by caspase-6 (CASP6), caspase-7 (CASP7) and caspase-8 (CASP8) during apoptosis, resulting in the dismantling of the autophagic machinery and the accomplishment of the programmed cell death program. Also cleaved by calpains during apoptosis, which mediate a complete proteolytic degradation.

It is found in the endoplasmic reticulum. It localises to the cytoplasm. The protein resides in the cytoskeleton. Its subcellular location is the cytoplasmic vesicle. The protein localises to the autophagosome. It is found in the mitochondrion. It localises to the cytosol. The protein resides in the nucleus. Its subcellular location is the cell junction. The protein localises to the focal adhesion. Its pathway is protein modification; protein ubiquitination. Functionally, substrate-recognition component of a DCX (DDB1-CUL4-X-box) E3 ubiquitin-protein ligase complex involved in cell cycle control and autophagy. The DCX(AMBRA1) complex specifically mediates the polyubiquitination of target proteins such as BECN1, CCND1, CCND2, CCND3, ELOC and ULK1. Acts as an upstream master regulator of the transition from G1 to S cell phase: AMBRA1 specifically recognizes and binds phosphorylated cyclin-D (CCND1, CCND2 and CCND3), leading to cyclin-D ubiquitination by the DCX(AMBRA1) complex and subsequent degradation. By controlling the transition from G1 to S phase and cyclin-D degradation, AMBRA1 acts as a tumor suppressor that promotes genomic integrity during DNA replication and counteracts developmental abnormalities and tumor growth. AMBRA1 also regulates the cell cycle by promoting MYC dephosphorylation and degradation independently of the DCX(AMBRA1) complex: acts via interaction with the catalytic subunit of protein phosphatase 2A (PPP2CA), which enhances interaction between PPP2CA and MYC, leading to MYC dephosphorylation and degradation. Acts as a regulator of Cul5-RING (CRL5) E3 ubiquitin-protein ligase complexes by mediating ubiquitination and degradation of Elongin-C (ELOC) component of CRL5 complexes. Acts as a key regulator of autophagy by modulating the BECN1-PIK3C3 complex: controls protein turnover during neuronal development, and regulates normal cell survival and proliferation. In normal conditions, AMBRA1 is tethered to the cytoskeleton via interaction with dyneins DYNLL1 and DYNLL2. Upon autophagy induction, AMBRA1 is released from the cytoskeletal docking site to induce autophagosome nucleation by mediating ubiquitination of proteins involved in autophagy. The DCX(AMBRA1) complex mediates 'Lys-63'-linked ubiquitination of BECN1, increasing the association between BECN1 and PIK3C3 to promote PIK3C3 activity. In collaboration with TRAF6, AMBRA1 mediates 'Lys-63'-linked ubiquitination of ULK1 following autophagy induction, promoting ULK1 stability and kinase activity. Also activates ULK1 via interaction with TRIM32: TRIM32 stimulates ULK1 through unanchored 'Lys-63'-linked polyubiquitin chains. Also acts as an activator of mitophagy via interaction with PRKN and LC3 proteins (MAP1LC3A, MAP1LC3B or MAP1LC3C); possibly by bringing damaged mitochondria onto autophagosomes. Also activates mitophagy by acting as a cofactor for HUWE1; acts by promoting HUWE1-mediated ubiquitination of MFN2. AMBRA1 is also involved in regulatory T-cells (Treg) differentiation by promoting FOXO3 dephosphorylation independently of the DCX(AMBRA1) complex: acts via interaction with PPP2CA, which enhances interaction between PPP2CA and FOXO3, leading to FOXO3 dephosphorylation and stabilization. May act as a regulator of intracellular trafficking, regulating the localization of active PTK2/FAK and SRC. Also involved in transcription regulation by acting as a scaffold for protein complexes at chromatin. This is Activating molecule in BECN1-regulated autophagy protein 1 from Homo sapiens (Human).